The following is a 658-amino-acid chain: Translin-associated factor X-interacting protein 1 (658 aa).

Coiled-coil stretches lie at residues 144 to 184 and 230 to 295; these read EISL…AEEY and ALKM…LMQL.

As to quaternary structure, interacts with TSNAX.

The protein resides in the cytoplasm. The protein localises to the perinuclear region. Functionally, possible role in spermatogenesis. The sequence is that of Translin-associated factor X-interacting protein 1 from Homo sapiens (Human).